Consider the following 202-residue polypeptide: Large ribosomal subunit protein uL18 (202 aa).

The protein belongs to the universal ribosomal protein uL18 family. As to quaternary structure, part of the 50S ribosomal subunit. Contacts the 5S and 23S rRNAs.

This is one of the proteins that bind and probably mediate the attachment of the 5S RNA into the large ribosomal subunit, where it forms part of the central protuberance. This Methanopyrus kandleri (strain AV19 / DSM 6324 / JCM 9639 / NBRC 100938) protein is Large ribosomal subunit protein uL18.